A 127-amino-acid polypeptide reads, in one-letter code: MSTPKELRYSEEHEWVKTEGDKVRIGITDFAQSELGDIVFVELPEVGDEIKADEPFGSVESVKTVSELYAPINGKVVEVNEDLEDSPEFVNESPYEKAWMIVVEPSDASEIENLMTAGQYEDMIKED.

The region spanning Lys-22–Glu-104 is the Lipoyl-binding domain. At Lys-63 the chain carries N6-lipoyllysine.

It belongs to the GcvH family. As to quaternary structure, the glycine cleavage system is composed of four proteins: P, T, L and H. (R)-lipoate is required as a cofactor.

Its function is as follows. The glycine cleavage system catalyzes the degradation of glycine. The H protein shuttles the methylamine group of glycine from the P protein to the T protein. In terms of biological role, is also involved in protein lipoylation via its role as an octanoyl/lipoyl carrier protein intermediate. This Bacillus licheniformis (strain ATCC 14580 / DSM 13 / JCM 2505 / CCUG 7422 / NBRC 12200 / NCIMB 9375 / NCTC 10341 / NRRL NRS-1264 / Gibson 46) protein is Glycine cleavage system H protein.